The sequence spans 699 residues: Elongation factor G (699 aa).

In terms of domain architecture, tr-type G spans 8–283 (EHIRNIGICA…AVVDFLPSPI (276 aa)). Residues 17–24 (AHIDAGKT), 81–85 (DTPGH), and 135–138 (NKMD) each bind GTP.

Belongs to the TRAFAC class translation factor GTPase superfamily. Classic translation factor GTPase family. EF-G/EF-2 subfamily.

The protein resides in the cytoplasm. In terms of biological role, catalyzes the GTP-dependent ribosomal translocation step during translation elongation. During this step, the ribosome changes from the pre-translocational (PRE) to the post-translocational (POST) state as the newly formed A-site-bound peptidyl-tRNA and P-site-bound deacylated tRNA move to the P and E sites, respectively. Catalyzes the coordinated movement of the two tRNA molecules, the mRNA and conformational changes in the ribosome. The protein is Elongation factor G of Rickettsia africae (strain ESF-5).